Consider the following 596-residue polypeptide: tRNA(Met) cytidine acetyltransferase TmcA (596 aa).

Residues Gln-138, 160-169 (GRGKSTLAGK), and Arg-285 contribute to the ATP site. The 154-residue stretch at 328 to 481 (SDLRRLFDAQ…SGYHSAMMLY (154 aa)) folds into the N-acetyltransferase domain. Acetyl-CoA-binding positions include 406–408 (IAV) and 413–419 (QKQGIGK).

The protein belongs to the RNA cytidine acetyltransferase family. TmcA subfamily.

Its subcellular location is the cytoplasm. The enzyme catalyses cytidine(34) in elongator tRNA(Met) + acetyl-CoA + ATP + H2O = N(4)-acetylcytidine(34) in elongator tRNA(Met) + ADP + phosphate + CoA + H(+). Its function is as follows. Catalyzes the formation of N(4)-acetylcytidine (ac(4)C) at the wobble position of tRNA(Met), by using acetyl-CoA as an acetyl donor and ATP (or GTP). The polypeptide is tRNA(Met) cytidine acetyltransferase TmcA (Actinobacillus pleuropneumoniae serotype 5b (strain L20)).